The primary structure comprises 49 residues: Large ribosomal subunit protein bL33B (49 aa).

The protein belongs to the bacterial ribosomal protein bL33 family.

The polypeptide is Large ribosomal subunit protein bL33B (Lactobacillus delbrueckii subsp. bulgaricus (strain ATCC BAA-365 / Lb-18)).